An 865-amino-acid polypeptide reads, in one-letter code: Leucine--tRNA ligase (865 aa).

The short motif at 58–68 is the 'HIGH' region element; it reads PYPSGNLHMGH. Residues 629–633 carry the 'KMSKS' region motif; it reads KMSKS. Residue lysine 632 participates in ATP binding.

It belongs to the class-I aminoacyl-tRNA synthetase family.

The protein resides in the cytoplasm. It carries out the reaction tRNA(Leu) + L-leucine + ATP = L-leucyl-tRNA(Leu) + AMP + diphosphate. The polypeptide is Leucine--tRNA ligase (Synechococcus elongatus (strain ATCC 33912 / PCC 7942 / FACHB-805) (Anacystis nidulans R2)).